The following is a 280-amino-acid chain: Formamidopyrimidine-DNA glycosylase (280 aa).

Catalysis depends on Pro-2, which acts as the Schiff-base intermediate with DNA. Glu-3 functions as the Proton donor in the catalytic mechanism. The active-site Proton donor; for beta-elimination activity is the Lys-59. Residues His-92 and Arg-111 each contribute to the DNA site. An FPG-type zinc finger spans residues 239–273 (NVYGQTGLPCNRCGTPIVKTKVAQRGTHYCPQCQQ). Catalysis depends on Arg-263, which acts as the Proton donor; for delta-elimination activity.

It belongs to the FPG family. Monomer. The cofactor is Zn(2+).

The enzyme catalyses Hydrolysis of DNA containing ring-opened 7-methylguanine residues, releasing 2,6-diamino-4-hydroxy-5-(N-methyl)formamidopyrimidine.. It catalyses the reaction 2'-deoxyribonucleotide-(2'-deoxyribose 5'-phosphate)-2'-deoxyribonucleotide-DNA = a 3'-end 2'-deoxyribonucleotide-(2,3-dehydro-2,3-deoxyribose 5'-phosphate)-DNA + a 5'-end 5'-phospho-2'-deoxyribonucleoside-DNA + H(+). Involved in base excision repair of DNA damaged by oxidation or by mutagenic agents. Acts as a DNA glycosylase that recognizes and removes damaged bases. Has a preference for oxidized purines, such as 7,8-dihydro-8-oxoguanine (8-oxoG). Has AP (apurinic/apyrimidinic) lyase activity and introduces nicks in the DNA strand. Cleaves the DNA backbone by beta-delta elimination to generate a single-strand break at the site of the removed base with both 3'- and 5'-phosphates. The protein is Formamidopyrimidine-DNA glycosylase of Enterococcus faecalis (strain ATCC 700802 / V583).